A 411-amino-acid chain; its full sequence is Probable peptidoglycan glycosyltransferase FtsW (411 aa).

The Cytoplasmic segment spans residues 1-40; it reads MLERMLPFLGRKRDKAAADLPVRVGHSAPRNSRMLEYDQN. A helical transmembrane segment spans residues 41 to 61; that stretch reads LVWVTLLLLAYGLVMVYSATI. Residues 62-81 lie on the Periplasmic side of the membrane; it reads SFHDSPRYAQWSPYHYFIRD. Residues 82–102 form a helical membrane-spanning segment; it reads LFSIAAALLASWIVVQIPMAE. Residues 103 to 109 lie on the Cytoplasmic side of the membrane; sequence LQKWSMR. Residues 110-130 traverse the membrane as a helical segment; the sequence is FFFLSLIGLVLVLLPHIGKDV. Residues 131-136 lie on the Periplasmic side of the membrane; sequence NGSKRW. The helical transmembrane segment at 137 to 157 threads the bilayer; it reads VVFPGGLNFQPSELVKLTALI. At 158 to 172 the chain is on the cytoplasmic side; it reads YAADFMVRKQEVKQS. Residues 173–193 traverse the membrane as a helical segment; that stretch reads LLKTFLPMMAVMMIVGVLLLA. Residues 194 to 196 are Periplasmic-facing; sequence EPD. The helical transmembrane segment at 197 to 217 threads the bilayer; that stretch reads MGAFLVIASITLAILFLGGAN. At 218-219 the chain is on the cytoplasmic side; the sequence is GK. Residues 220–240 traverse the membrane as a helical segment; that stretch reads LFSVFSVAVIGAFVLMIVLSP. The Periplasmic segment spans residues 241 to 298; sequence WRRDRIFAYLNPWSESNALGSAYQLSHALIAMGRGEWFGVGLGGSIEKLHYLPEAHTD. A helical membrane pass occupies residues 299 to 319; sequence FLLAIIGEELGLVGVGVVIFA. Over 320–347 the chain is Cytoplasmic; sequence FYWIVRRAFDIGRQALVLDRMYSALVAQ. The helical transmembrane segment at 348 to 368 threads the bilayer; sequence GIGVWIGGQAFINIGVNLGLL. Residues 369-374 lie on the Periplasmic side of the membrane; it reads PTKGLT. Residues 375-395 traverse the membrane as a helical segment; sequence LPLMSYGGSALLLNCMAIAVL. The Cytoplasmic segment spans residues 396 to 411; the sequence is LRVDFENRILMRGGHV.

The protein belongs to the SEDS family. FtsW subfamily.

Its subcellular location is the cell inner membrane. It catalyses the reaction [GlcNAc-(1-&gt;4)-Mur2Ac(oyl-L-Ala-gamma-D-Glu-L-Lys-D-Ala-D-Ala)](n)-di-trans,octa-cis-undecaprenyl diphosphate + beta-D-GlcNAc-(1-&gt;4)-Mur2Ac(oyl-L-Ala-gamma-D-Glu-L-Lys-D-Ala-D-Ala)-di-trans,octa-cis-undecaprenyl diphosphate = [GlcNAc-(1-&gt;4)-Mur2Ac(oyl-L-Ala-gamma-D-Glu-L-Lys-D-Ala-D-Ala)](n+1)-di-trans,octa-cis-undecaprenyl diphosphate + di-trans,octa-cis-undecaprenyl diphosphate + H(+). The protein operates within cell wall biogenesis; peptidoglycan biosynthesis. In terms of biological role, peptidoglycan polymerase that is essential for cell division. In Thiomonas intermedia (strain K12) (Thiobacillus intermedius), this protein is Probable peptidoglycan glycosyltransferase FtsW.